Consider the following 193-residue polypeptide: Molybdenum cofactor guanylyltransferase (193 aa).

GTP contacts are provided by residues 8–10 (LAG), Lys-21, Asp-67, and Asp-98. Asp-98 serves as a coordination point for Mg(2+).

The protein belongs to the MobA family. Monomer. Mg(2+) is required as a cofactor.

The protein resides in the cytoplasm. It catalyses the reaction Mo-molybdopterin + GTP + H(+) = Mo-molybdopterin guanine dinucleotide + diphosphate. Transfers a GMP moiety from GTP to Mo-molybdopterin (Mo-MPT) cofactor (Moco or molybdenum cofactor) to form Mo-molybdopterin guanine dinucleotide (Mo-MGD) cofactor. This chain is Molybdenum cofactor guanylyltransferase, found in Cereibacter sphaeroides (strain ATCC 17023 / DSM 158 / JCM 6121 / CCUG 31486 / LMG 2827 / NBRC 12203 / NCIMB 8253 / ATH 2.4.1.) (Rhodobacter sphaeroides).